The sequence spans 433 residues: Aspartate--tRNA(Asp/Asn) ligase (433 aa).

Glutamate 167 provides a ligand contact to L-aspartate. Residues 189–192 (QLFK) form an aspartate region. Residue arginine 211 participates in L-aspartate binding. ATP is bound by residues 211–213 (RAE), 219–221 (RHL), and glutamate 356. Positions 356 and 359 each coordinate Mg(2+). L-aspartate is bound by residues serine 359 and arginine 363. Residue 404–407 (GGER) coordinates ATP.

It belongs to the class-II aminoacyl-tRNA synthetase family. Type 2 subfamily. As to quaternary structure, homodimer. It depends on Mg(2+) as a cofactor.

The protein localises to the cytoplasm. The catalysed reaction is tRNA(Asx) + L-aspartate + ATP = L-aspartyl-tRNA(Asx) + AMP + diphosphate. Aspartyl-tRNA synthetase with relaxed tRNA specificity since it is able to aspartylate not only its cognate tRNA(Asp) but also tRNA(Asn). Reaction proceeds in two steps: L-aspartate is first activated by ATP to form Asp-AMP and then transferred to the acceptor end of tRNA(Asp/Asn). The sequence is that of Aspartate--tRNA(Asp/Asn) ligase from Haloferax volcanii (Halobacterium volcanii).